The chain runs to 293 residues: Actin-related protein 2/3 complex subunit 2 (293 aa).

This sequence belongs to the ARPC2 family. Component of the Arp2/3 complex composed of arpB/Arp2, arpC/Arp3, arcA/p41-arc, arcB/p34-arc, arcC/p21-arc, arcD/p20-arc and arcE/p16-arc. Interacts with carmil (via the region between the LRR domain and COOH-terminal proline-rich domain); carmil is required for Arp2/3-dependent actin nucleation. Arp2/3 complex, MyoB, MyoC, and the alpha and beta subunits of capping protein all form a larger complex with carmil.

It localises to the cytoplasm. It is found in the cytoskeleton. The protein localises to the cell projection. The protein resides in the cytosol. Its subcellular location is the cell cortex. It localises to the pseudopodium. Its function is as follows. Functions as a component of the Arp2/3 complex which is involved in regulation of actin polymerization and together with an activating nucleation-promoting factor (NPF) mediates the formation of branched actin networks. Seems to contact the pointed end of the daughter actin filament. The Arp2/3 complex is involved in organizing the actin system in cell motility and chemotaxis, in phagocytosis and macropinocytosis, at late steps of endosome processing, and in mitosis. In concert with a group of other proteins, the Arp2/3 complex plays a general role in the rapid activation and adaptation of the actin system to its multiple functions. The chain is Actin-related protein 2/3 complex subunit 2 (arcB) from Dictyostelium discoideum (Social amoeba).